Here is a 153-residue protein sequence, read N- to C-terminus: UPF0127 protein TGAM_1372 (153 aa).

This sequence belongs to the UPF0127 family.

The polypeptide is UPF0127 protein TGAM_1372 (Thermococcus gammatolerans (strain DSM 15229 / JCM 11827 / EJ3)).